The following is a 259-amino-acid chain: Eukaryotic translation initiation factor 3 subunit G-2 (259 aa).

An RRM domain is found at 179–257 (SAVRISNLSE…LILSVEWSKP (79 aa)).

It belongs to the eIF-3 subunit G family. Component of the eukaryotic translation initiation factor 3 (eIF-3) complex. The eIF-3 complex interacts with pix.

It is found in the cytoplasm. In terms of biological role, RNA-binding component of the eukaryotic translation initiation factor 3 (eIF-3) complex, which is involved in protein synthesis of a specialized repertoire of mRNAs and, together with other initiation factors, stimulates binding of mRNA and methionyl-tRNAi to the 40S ribosome. The eIF-3 complex specifically targets and initiates translation of a subset of mRNAs involved in cell proliferation. This subunit can bind 18S rRNA. This chain is Eukaryotic translation initiation factor 3 subunit G-2, found in Drosophila mojavensis (Fruit fly).